An 887-amino-acid chain; its full sequence is Pyruvate dehydrogenase E1 component (887 aa).

Residues D231, N261, and Q263 each coordinate Mg(2+). K716 carries the N6-acetyllysine modification.

Homodimer. Part of the PDH complex, consisting of multiple copies of pyruvate dehydrogenase (E1), dihydrolipoamide acetyltransferase (E2) and lipoamide dehydrogenase (E3). Mg(2+) is required as a cofactor. It depends on thiamine diphosphate as a cofactor.

The enzyme catalyses N(6)-[(R)-lipoyl]-L-lysyl-[protein] + pyruvate + H(+) = N(6)-[(R)-S(8)-acetyldihydrolipoyl]-L-lysyl-[protein] + CO2. Its function is as follows. Component of the pyruvate dehydrogenase (PDH) complex, that catalyzes the overall conversion of pyruvate to acetyl-CoA and CO(2). This is Pyruvate dehydrogenase E1 component (aceE) from Escherichia coli O157:H7.